Reading from the N-terminus, the 446-residue chain is Alpha-galacturonidase (446 aa).

Isoleucine 10–threonine 72 provides a ligand contact to NAD(+). A substrate-binding site is contributed by asparagine 151. Cysteine 173 contributes to the Mn(2+) binding site. Histidine 174 acts as the Proton donor in catalysis. Histidine 210 provides a ligand contact to Mn(2+).

Belongs to the glycosyl hydrolase 4 family. In terms of assembly, homotetramer. The cofactor is NAD(+). It depends on Mn(2+) as a cofactor.

The catalysed reaction is [(1-&gt;4)-alpha-D-galacturonosyl](n) + H2O = alpha-D-galacturonate + [(1-&gt;4)-alpha-D-galacturonosyl](n-1). Alpha-galacturonidase able to catalyze the hydrolysis of the chromogenic substrate p-nitrophenyl-alpha-D-galacturonic acid (pNPalphaGalUA), and of the probable natural substrate alpha-1,4-di-galacturonate (GalUA(2)). Can neither hydrolyze pNPbetaGalUA, nor the stereoisomeric pNPalphaGlcUA. Does not display alpha- or beta-glucosidase activity as it fails to hydrolyze melibiose, raffinose, lactose and the chromogenic analogs, pNPalphaGal and pNPbetaGal. Cannot use the following compounds as substrates: pNP-N-acetyl-alpha- and beta-D-galactosaminide, pNP-N-acetyl-alpha- and beta-D-glucosaminide, pNP-alpha-L- and beta-L-arabinopyranoside, pNP-alpha- and beta-D-glucuronide, pNP-alpha- and beta-D-glucopyranoside, pNP-alpha- and beta-D-glucopyranoside 6-phosphate, pNP-alpha-D-galactopyranoside 6-phosphate and oNP-beta-D-galactopyranoside 6-phosphate. This is Alpha-galacturonidase (lplD) from Bacillus subtilis (strain 168).